Consider the following 274-residue polypeptide: Large ribosomal subunit protein uL2 (274 aa).

The disordered stretch occupies residues 224–256 (AMNPIDHPHGGGEGRTGEGRHAVDPWGNLTKGY). The segment covering 229–246 (DHPHGGGEGRTGEGRHAV) has biased composition (basic and acidic residues).

The protein belongs to the universal ribosomal protein uL2 family. In terms of assembly, part of the 50S ribosomal subunit. Forms a bridge to the 30S subunit in the 70S ribosome.

In terms of biological role, one of the primary rRNA binding proteins. Required for association of the 30S and 50S subunits to form the 70S ribosome, for tRNA binding and peptide bond formation. It has been suggested to have peptidyltransferase activity; this is somewhat controversial. Makes several contacts with the 16S rRNA in the 70S ribosome. This chain is Large ribosomal subunit protein uL2, found in Acidovorax ebreus (strain TPSY) (Diaphorobacter sp. (strain TPSY)).